A 1547-amino-acid chain; its full sequence is Fatty acid synthase subunit alpha (1547 aa).

Residues 94-121 form a disordered region; sequence TLPEAHPPPPIDSHQEPSTQTQATHRSA. Polar residues predominate over residues 109 to 118; it reads EPSTQTQATH. Residues 145–221 form the Carrier domain; sequence LPVSTIVRSL…ETMSIGHNGR (77 aa). S180 bears the O-(pantetheine 4'-phosphoryl)serine mark. Residues 563-798 form a ketoreductase (KR) domain region; the sequence is GKNVLITGAG…ATLMGGTITT (236 aa). A Ketosynthase family 3 (KS3) domain is found at 1004 to 1476; that stretch reads KESLQEIVLQ…QKGSQAILIH (473 aa). Active-site for beta-ketoacyl synthase activity residues include C1190 and H1442.

It belongs to the thiolase-like superfamily. Fungal fatty acid synthetase subunit alpha family. Requires pantetheine 4'-phosphate as cofactor.

It carries out the reaction acetyl-CoA + n malonyl-CoA + 2n NADPH + 4n H(+) = a long-chain-acyl-CoA + n CoA + n CO2 + 2n NADP(+).. It catalyses the reaction a fatty acyl-[ACP] + malonyl-[ACP] + H(+) = a 3-oxoacyl-[ACP] + holo-[ACP] + CO2. The enzyme catalyses a (3R)-hydroxyacyl-[ACP] + NADP(+) = a 3-oxoacyl-[ACP] + NADPH + H(+). The protein operates within mycotoxin biosynthesis; HC-toxin biosynthesis. In terms of biological role, fatty acid synthase alpha subunit, part of the diffuse TOX2 gene cluster that mediates the biosynthesis of the HC-toxin, cyclic tetrapeptide of structure cyclo(D-Pro-L-Ala-D-Ala-L-Aeo), where Aeo stands for 2-amino-9,10-epoxi-8-oxodecanoic acid. HC-toxin is a determinant of specificity and virulence in the interaction between the producing fungus and its host, maize. TOXH contribute to the synthesis of the decanoic backbone of 2-amino-9,10-epoxi-8-oxodecanoic acid, an essential precursor for the production of the major forms of HC-toxin by the non-ribosomal peptide synthetase HTS1. This chain is Fatty acid synthase subunit alpha, found in Cochliobolus carbonum (Maize leaf spot fungus).